Reading from the N-terminus, the 473-residue chain is Lysophospholipid acyltransferase 5 (473 aa).

4 consecutive transmembrane segments (helical) span residues Leu20–Asn40, Ala43–Gly63, Val66–Thr86, and Ala88–His108. Catalysis depends on residues Asn315 and His351. The next 3 helical transmembrane spans lie at Val341–Phe361, Phe396–Phe416, and Leu431–Leu451. A Di-lysine motif motif is present at residues Lys470–Leu473.

It belongs to the membrane-bound acyltransferase family.

It is found in the endoplasmic reticulum membrane. It catalyses the reaction a 1-acyl-sn-glycero-3-phosphocholine + an acyl-CoA = a 1,2-diacyl-sn-glycero-3-phosphocholine + CoA. It carries out the reaction a 1-acyl-sn-glycero-3-phospho-L-serine + an acyl-CoA = a 1,2-diacyl-sn-glycero-3-phospho-L-serine + CoA. The catalysed reaction is a 1-acyl-sn-glycero-3-phosphoethanolamine + an acyl-CoA = a 1,2-diacyl-sn-glycero-3-phosphoethanolamine + CoA. Its pathway is lipid metabolism; phospholipid metabolism. Functionally, probable acyltransferase which may mediate the conversion of lysophosphatidylcholine (1-acyl-sn-glycero-3-phosphocholine or LPC) into phosphatidylcholine (1,2-diacyl-sn-glycero-3-phosphocholine or PC) (LPCAT activity). May also catalyze the conversion of lysophosphatidylethanolamine (1-acyl-2-hydroxy-sn-glycero-3-phosphoethanolamine or LPE) into phosphatidylethanolamine (1,2-diacyl-sn-glycero-3-phosphoethanolamine or PE) (LPEAT activity), as well as the conversion of lysophosphatidylserine (1-acyl-2-hydroxy-sn-glycero-3-phospho-L-serine or LPS) into phosphatidylserine (1,2-diacyl-sn-glycero-3-phospho-L-serine or PS) (LPSAT activity). Required for incorporation of arachidonic acid into PC, PE, and PS. This chain is Lysophospholipid acyltransferase 5 (mboa-6), found in Caenorhabditis elegans.